The sequence spans 323 residues: Magnesium transporter NIPA1 (323 aa).

Residues Met1 to Ala21 lie on the Extracellular side of the membrane. Residues Val22–Leu42 traverse the membrane as a helical segment. The Cytoplasmic portion of the chain corresponds to Gln43–Asp60. A helical membrane pass occupies residues Ile61–Tyr81. A topological domain (extracellular) is located at residue Thr82. A helical transmembrane segment spans residues Ala83–Leu103. Topologically, residues Ala104–Lys111 are cytoplasmic. The chain crosses the membrane as a helical span at residues Leu112 to Ile132. The Extracellular segment spans residues His133–Pro153. The helical transmembrane segment at Val154–Ala174 threads the bilayer. At Pro175–His177 the chain is on the cytoplasmic side. The chain crosses the membrane as a helical span at residues Gly178–Pro198. Topologically, residues Ser199–Gln218 are extracellular. A helical transmembrane segment spans residues Arg219–Phe239. Over Arg240–Val253 the chain is Cytoplasmic. A helical membrane pass occupies residues Phe254–Phe274. Residues Arg275 to Asp284 are Extracellular-facing. Residues Phe285–Phe305 form a helical membrane-spanning segment. At Lys306 to Asp323 the chain is on the cytoplasmic side.

Belongs to the NIPA family. In terms of assembly, homodimer. Widely expressed. Predominantly expressed in neuronal tissues. Brain, heart, kidney, liver and colon (at protein level).

It is found in the cell membrane. It localises to the early endosome. The catalysed reaction is Mg(2+)(in) = Mg(2+)(out). Acts as a Mg(2+) transporter. Can also transport other divalent cations such as Fe(2+), Sr(2+), Ba(2+), Zn(2+) and Co(2+) but to a much less extent than Mg(2+). The sequence is that of Magnesium transporter NIPA1 (Nipa1) from Mus musculus (Mouse).